The primary structure comprises 301 residues: Probable alpha-L-glutamate ligase (301 aa).

The 184-residue stretch at Leu104–Glu287 folds into the ATP-grasp domain. ATP-binding positions include Lys141, Glu178–Phe179, Asp187, and Arg211–Asn213. 3 residues coordinate Mg(2+): Asp248, Glu260, and Asn262. Mn(2+) is bound by residues Asp248, Glu260, and Asn262.

It belongs to the RimK family. The cofactor is Mg(2+). It depends on Mn(2+) as a cofactor.

The sequence is that of Probable alpha-L-glutamate ligase from Teredinibacter turnerae (strain ATCC 39867 / T7901).